The chain runs to 228 residues: MTEYLLSAGICMAIVSILLIGMAISNVSKEQYAKRFFFFATSCLVLTLVVASSLSSSANASQTDNGVNRSGSEYPTVYSATSTKKLHKEPATLIKAIDGDTVKLMYKGQPMTFRLLLVDTPETKHPKKGVEKYGPEASAFTKKMVENAKKIEVEFDKGQRTDKYGRGLAYIYADGKMVNEALVRQGLAKVAYVYKPNNTHEQLLRKSEAQAKKEKLNIWSEDNADSGQ.

A signal peptide spans 1–23; that stretch reads MTEYLLSAGICMAIVSILLIGMA. The propeptide occupies 24–60; it reads ISNVSKEQYAKRFFFFATSCLVLTLVVASSLSSSANA. Asp100 provides a ligand contact to Ca(2+). Arg114 is an active-site residue. Ca(2+) is bound by residues Asp119 and Thr120. Residues Glu122 and Arg166 contribute to the active site.

This sequence belongs to the thermonuclease family. Ca(2+) serves as cofactor.

It is found in the secreted. The enzyme catalyses Endonucleolytic cleavage to nucleoside 3'-phosphates and 3'-phosphooligonucleotide end-products.. Its function is as follows. Enzyme that catalyzes the hydrolysis of both DNA and RNA at the 5' position of the phosphodiester bond. The polypeptide is Thermonuclease (nuc) (Staphylococcus aureus (strain MRSA252)).